The chain runs to 365 residues: 5-hydroxytryptamine receptor 1E (365 aa).

The Extracellular portion of the chain corresponds to 1–22; it reads MNITNCTTDASMVVRPKTVTEK. Asparagine 2 and asparagine 5 each carry an N-linked (GlcNAc...) asparagine glycan. A helical transmembrane segment spans residues 23-47; that stretch reads MLICMTLVIITTLTMLLNSAVIMAI. The Cytoplasmic segment spans residues 48 to 59; sequence CTTKKLHQPANY. A helical transmembrane segment spans residues 60–82; sequence LICSLAVTDLLVAVLVMPLSIMY. At 83 to 96 the chain is on the extracellular side; that stretch reads IVMDSWRLGYFICE. A disulfide bridge links cysteine 95 with cysteine 173. The chain crosses the membrane as a helical span at residues 97 to 118; sequence VWLSVDMTCCTCSILHLCVIAL. Ergotamine contacts are provided by aspartate 102 and threonine 107. Positions 119-121 match the DRY motif; important for ligand-induced conformation changes motif; it reads DRY. At 119 to 138 the chain is on the cytoplasmic side; sequence DRYWAITNAIEYARKRTAKR. Residues 139-160 traverse the membrane as a helical segment; it reads AGLMILTVWTISIFISMPPLFW. Residues 161–179 lie on the Extracellular side of the membrane; it reads RSHRQLSPPPSQCTIQHDH. Isoleucine 175 contacts ergotamine. Residues 180-202 form a helical membrane-spanning segment; that stretch reads VIYTIYSTFGAFYIPLTLILILY. Residues 203 to 291 lie on the Cytoplasmic side of the membrane; the sequence is YRIYHAAKSL…SSTRERKAAR (89 aa). Residues 292 to 314 traverse the membrane as a helical segment; the sequence is ILGLILGAFILSWLPFFIKELIV. Topologically, residues 315 to 324 are extracellular; that stretch reads GLSIYTVSSE. The helical transmembrane segment at 325 to 347 threads the bilayer; it reads VGDFLTWLGYVNSLINPLLYTSF. The NPxxY motif; important for ligand-induced conformation changes and signaling motif lies at 340-344; it reads NPLLY. Residues 348–365 are Cytoplasmic-facing; it reads NEDFKLAFKKLIRCREHT.

It belongs to the G-protein coupled receptor 1 family. In terms of tissue distribution, detected in the brain with the greatest abundance in the hippocampus, followed by the olfactory bulb. Lower levels are detected in the cortex, thalamus, pons, hypothalamus, midbrain, striatum, and cerebellum.

The protein resides in the cell membrane. Functionally, G-protein coupled receptor for 5-hydroxytryptamine (serotonin). Also functions as a receptor for various alkaloids and psychoactive substances. Ligand binding causes a conformation change that triggers signaling via guanine nucleotide-binding proteins (G proteins) and modulates the activity of down-stream effectors, such as adenylate cyclase. Signaling inhibits adenylate cyclase activity. The polypeptide is 5-hydroxytryptamine receptor 1E (5HT1E) (Cavia porcellus (Guinea pig)).